The following is a 159-amino-acid chain: Transcriptional repressor NrdR (159 aa).

A zinc finger lies at 3–34 (CPFCGGVENKVMDSRVSRDGNAIRRRRECLAC). Residues 49–139 (PTVVKKDGRR…VYRQFRDVND (91 aa)) form the ATP-cone domain.

It belongs to the NrdR family. The cofactor is Zn(2+).

Negatively regulates transcription of bacterial ribonucleotide reductase nrd genes and operons by binding to NrdR-boxes. This Syntrophus aciditrophicus (strain SB) protein is Transcriptional repressor NrdR.